A 215-amino-acid polypeptide reads, in one-letter code: Glutathione S-transferase F9 (215 aa).

Residues 2 to 81 (VLKVYGPHFA…YVAEKYRSQG (80 aa)) enclose the GST N-terminal domain. Glutathione is bound at residue 11-12 (AS). Residue Ser12 is modified to Phosphoserine. Met35 carries the methionine sulfoxide modification. Glutathione is bound by residues 39–40 (HK), 52–53 (TV), and 65–66 (ES). A GST C-terminal domain is found at 88–215 (TVEDRGQVEQ…ETVAKYSFPA (128 aa)). Methionine sulfoxide occurs at positions 118, 123, and 184.

Belongs to the GST superfamily. Phi family. In terms of processing, oxidated at Met-35, Met-118, Met-123 and Met-184 in oxidative stress conditions (e.g. hydrogen peroxide H(2)O(2)).

The protein resides in the cytoplasm. It localises to the cytosol. The catalysed reaction is RX + glutathione = an S-substituted glutathione + a halide anion + H(+). Redox-regulated enzyme; in oxidative stress conditions methionine oxidation ensure a thermodynamic and structural compensatory mechanism to guarantee H(2)O(2) peroxidase activity despite transferase activity inhibition. Its function is as follows. In vitro, possesses glutathione S-transferase activity toward 1-chloro-2,4-dinitrobenzene (CDNB) and benzyl isothiocyanate (BITC), and glutathione peroxidase activity toward cumene hydroperoxide and linoleic acid-13-hydroperoxide. May be involved in the conjugation of reduced glutathione to a wide number of exogenous and endogenous hydrophobic electrophiles and have a detoxification role against certain herbicides. This Arabidopsis thaliana (Mouse-ear cress) protein is Glutathione S-transferase F9.